We begin with the raw amino-acid sequence, 115 residues long: Large ribosomal subunit protein bL20 (115 aa).

Belongs to the bacterial ribosomal protein bL20 family.

In terms of biological role, binds directly to 23S ribosomal RNA and is necessary for the in vitro assembly process of the 50S ribosomal subunit. It is not involved in the protein synthesizing functions of that subunit. This is Large ribosomal subunit protein bL20 from Myxococcus xanthus (strain DK1622).